The chain runs to 411 residues: Na(+)-translocating NADH-quinone reductase subunit F (411 aa).

A helical membrane pass occupies residues 5–25 (VILALGIAAFTVIVLVLVAII). Positions 36–130 (GDITIDINDD…NMEVELPEEI (95 aa)) constitute a 2Fe-2S ferredoxin-type domain. Residues cysteine 73, cysteine 79, cysteine 82, and cysteine 114 each contribute to the [2Fe-2S] cluster site. One can recognise an FAD-binding FR-type domain in the interval 133–273 (VKKWECTVIS…SGPFGEFFAK (141 aa)).

This sequence belongs to the NqrF family. As to quaternary structure, composed of six subunits; NqrA, NqrB, NqrC, NqrD, NqrE and NqrF. [2Fe-2S] cluster is required as a cofactor. It depends on FAD as a cofactor.

It is found in the cell inner membrane. The enzyme catalyses a ubiquinone + n Na(+)(in) + NADH + H(+) = a ubiquinol + n Na(+)(out) + NAD(+). Functionally, NQR complex catalyzes the reduction of ubiquinone-1 to ubiquinol by two successive reactions, coupled with the transport of Na(+) ions from the cytoplasm to the periplasm. The first step is catalyzed by NqrF, which accepts electrons from NADH and reduces ubiquinone-1 to ubisemiquinone by a one-electron transfer pathway. The chain is Na(+)-translocating NADH-quinone reductase subunit F from Haemophilus influenzae (strain 86-028NP).